The sequence spans 229 residues: Endonuclease V (229 aa).

Positions 36 and 104 each coordinate Mg(2+).

The protein belongs to the endonuclease V family. Mg(2+) is required as a cofactor.

It localises to the cytoplasm. The enzyme catalyses Endonucleolytic cleavage at apurinic or apyrimidinic sites to products with a 5'-phosphate.. DNA repair enzyme involved in the repair of deaminated bases. Selectively cleaves double-stranded DNA at the second phosphodiester bond 3' to a deoxyinosine leaving behind the intact lesion on the nicked DNA. This Pectobacterium carotovorum subsp. carotovorum (strain PC1) protein is Endonuclease V.